Reading from the N-terminus, the 304-residue chain is Porphobilinogen deaminase (304 aa).

Cys241 carries the post-translational modification S-(dipyrrolylmethanemethyl)cysteine.

Belongs to the HMBS family. As to quaternary structure, monomer. It depends on dipyrromethane as a cofactor.

It carries out the reaction 4 porphobilinogen + H2O = hydroxymethylbilane + 4 NH4(+). Its pathway is porphyrin-containing compound metabolism; protoporphyrin-IX biosynthesis; coproporphyrinogen-III from 5-aminolevulinate: step 2/4. Its function is as follows. Tetrapolymerization of the monopyrrole PBG into the hydroxymethylbilane pre-uroporphyrinogen in several discrete steps. This chain is Porphobilinogen deaminase, found in Vesicomyosocius okutanii subsp. Calyptogena okutanii (strain HA).